We begin with the raw amino-acid sequence, 180 residues long: Small ribosomal subunit protein uS4 (180 aa).

Residues arginine 103–alanine 174 form the S4 RNA-binding domain.

It belongs to the universal ribosomal protein uS4 family. As to quaternary structure, part of the 30S ribosomal subunit. Contacts protein S5. The interaction surface between S4 and S5 is involved in control of translational fidelity.

Functionally, one of the primary rRNA binding proteins, it binds directly to 16S rRNA where it nucleates assembly of the body of the 30S subunit. Its function is as follows. With S5 and S12 plays an important role in translational accuracy. The polypeptide is Small ribosomal subunit protein uS4 (Pyrococcus horikoshii (strain ATCC 700860 / DSM 12428 / JCM 9974 / NBRC 100139 / OT-3)).